Reading from the N-terminus, the 333-residue chain is Porphobilinogen deaminase (333 aa).

Cys255 carries the S-(dipyrrolylmethanemethyl)cysteine modification.

The protein belongs to the HMBS family. As to quaternary structure, monomer. It depends on dipyrromethane as a cofactor.

The enzyme catalyses 4 porphobilinogen + H2O = hydroxymethylbilane + 4 NH4(+). The protein operates within porphyrin-containing compound metabolism; protoporphyrin-IX biosynthesis; coproporphyrinogen-III from 5-aminolevulinate: step 2/4. Tetrapolymerization of the monopyrrole PBG into the hydroxymethylbilane pre-uroporphyrinogen in several discrete steps. This Burkholderia vietnamiensis (strain G4 / LMG 22486) (Burkholderia cepacia (strain R1808)) protein is Porphobilinogen deaminase.